Reading from the N-terminus, the 504-residue chain is Maturase K (504 aa).

Belongs to the intron maturase 2 family. MatK subfamily.

Its subcellular location is the plastid. The protein resides in the chloroplast. Functionally, usually encoded in the trnK tRNA gene intron. Probably assists in splicing its own and other chloroplast group II introns. In Simmondsia chinensis (Jojoba), this protein is Maturase K.